The chain runs to 329 residues: DNA-directed RNA polymerase subunit alpha (329 aa).

An alpha N-terminal domain (alpha-NTD) region spans residues 1–235 (MQGSVTEFLK…EQLDAFVDLR (235 aa)). Positions 249 to 329 (FDPILLRPVD…NWPPASIAED (81 aa)) are alpha C-terminal domain (alpha-CTD).

It belongs to the RNA polymerase alpha chain family. In terms of assembly, homodimer. The RNAP catalytic core consists of 2 alpha, 1 beta, 1 beta' and 1 omega subunit. When a sigma factor is associated with the core the holoenzyme is formed, which can initiate transcription.

It carries out the reaction RNA(n) + a ribonucleoside 5'-triphosphate = RNA(n+1) + diphosphate. In terms of biological role, DNA-dependent RNA polymerase catalyzes the transcription of DNA into RNA using the four ribonucleoside triphosphates as substrates. The polypeptide is DNA-directed RNA polymerase subunit alpha (Actinobacillus pleuropneumoniae serotype 5b (strain L20)).